The primary structure comprises 290 residues: Fructose-1,6-bisphosphatase class 1 (290 aa).

The Mg(2+) site is built by Glu78, Asp96, Leu98, and Asp99. Residues 99 to 102 (DGSS), Tyr201, and Lys226 contribute to the substrate site. Glu232 serves as a coordination point for Mg(2+).

It belongs to the FBPase class 1 family. As to quaternary structure, homotetramer. The cofactor is Mg(2+).

Its subcellular location is the cytoplasm. It catalyses the reaction beta-D-fructose 1,6-bisphosphate + H2O = beta-D-fructose 6-phosphate + phosphate. It functions in the pathway carbohydrate biosynthesis; gluconeogenesis. The chain is Fructose-1,6-bisphosphatase class 1 from Helicobacter pylori (strain HPAG1).